Reading from the N-terminus, the 144-residue chain is Large ribosomal subunit protein uL13 (144 aa).

Belongs to the universal ribosomal protein uL13 family. In terms of assembly, part of the 50S ribosomal subunit.

In terms of biological role, this protein is one of the early assembly proteins of the 50S ribosomal subunit, although it is not seen to bind rRNA by itself. It is important during the early stages of 50S assembly. The chain is Large ribosomal subunit protein uL13 from Nitrosospira multiformis (strain ATCC 25196 / NCIMB 11849 / C 71).